Reading from the N-terminus, the 706-residue chain is Serotransferrin (706 aa).

The first 19 residues, 1 to 19 (MRLAIRALLACAVLGLCLA), serve as a signal peptide directing secretion. Transferrin-like domains are found at residues 23–349 (VRWC…NLRE) and 363–691 (VKWC…NLRQ). Intrachain disulfides connect Cys-26-Cys-64 and Cys-36-Cys-55. Residue Arg-40 is modified to Dimethylated arginine. Asp-79 and Tyr-111 together coordinate Fe(3+). Cystine bridges form between Cys-134–Cys-215, Cys-174–Cys-190, Cys-177–Cys-198, Cys-187–Cys-200, and Cys-248–Cys-262. The hydrogencarbonate site is built by Thr-136, Arg-140, Ala-142, and Gly-143. Tyr-209 contributes to the Fe(3+) binding site. His-270 is a Fe(3+) binding site. 11 cysteine pairs are disulfide-bonded: Cys-360–Cys-623, Cys-366–Cys-398, Cys-376–Cys-389, Cys-423–Cys-701, Cys-441–Cys-664, Cys-474–Cys-550, Cys-498–Cys-692, Cys-508–Cys-522, Cys-519–Cys-533, Cys-590–Cys-604, and Cys-642–Cys-647. Ser-391 carries the post-translational modification Phosphoserine. 2 residues coordinate Fe(3+): Asp-413 and Tyr-449. Positions 476, 480, 482, and 483 each coordinate hydrogencarbonate. Residue Asn-515 is glycosylated (N-linked (GlcNAc...) asparagine). Tyr-544 is a binding site for Fe(3+). Residue His-612 coordinates Fe(3+). At Ser-693 the chain carries Phosphoserine.

This sequence belongs to the transferrin family. As to quaternary structure, monomer. Part of a complex composed of SLC40A1/ferroportin, TF/transferrin and HEPH/hephaestin that transfers iron from cells to transferrin. In terms of tissue distribution, expressed by the liver and secreted in plasma.

It is found in the secreted. In terms of biological role, transferrins are iron binding transport proteins which can bind two Fe(3+) ions in association with the binding of an anion, usually bicarbonate. It is responsible for the transport of iron from sites of absorption and heme degradation to those of storage and utilization. Serum transferrin may also have a further role in stimulating cell proliferation. The chain is Serotransferrin (TF) from Equus caballus (Horse).